Reading from the N-terminus, the 117-residue chain is MVQRLTYRRRLSYNTASNKTRLSRTPGNRIVYLYTKKVGKAPKSACGVCPGRLRGVRAVRPKVLMRLSKTKKHVSRAYGGSMCAKCVRDRIKRAFLIEEQKIVVKVLKAQAQSQKAK.

S12 is modified (phosphoserine). N6-acetyllysine occurs at positions 36 and 43. Residue K108 forms a Glycyl lysine isopeptide (Lys-Gly) (interchain with G-Cter in SUMO2) linkage.

It belongs to the eukaryotic ribosomal protein eL34 family. As to quaternary structure, component of the large ribosomal subunit.

The protein localises to the cytoplasm. Its subcellular location is the cytosol. It is found in the endoplasmic reticulum. In terms of biological role, component of the large ribosomal subunit. The ribosome is a large ribonucleoprotein complex responsible for the synthesis of proteins in the cell. This chain is Large ribosomal subunit protein eL34 (RPL34), found in Sus scrofa (Pig).